Reading from the N-terminus, the 193-residue chain is MKQLEDKIREEGRALSDQVLKVDAFLNHQVDPVLMQAIGKEFAERFKDAQIDRIVTLESSGIAPAMMTALEMDIPFVFARKRKSLTLQDDLVEADVYSFTKQETNRISLSRRFVLPGERVLVIDDFLANGEAALGLTQLVEAAGAEVSGVGIVIEKSFQLGRDKLIERGYRVESLARVAKLEKDHISFVEVVR.

Positions 20 and 27 each coordinate xanthine. 128–132 (ANGEA) provides a ligand contact to 5-phospho-alpha-D-ribose 1-diphosphate. Position 156 (Lys-156) interacts with xanthine.

This sequence belongs to the purine/pyrimidine phosphoribosyltransferase family. Xpt subfamily. As to quaternary structure, homodimer.

The protein localises to the cytoplasm. The catalysed reaction is XMP + diphosphate = xanthine + 5-phospho-alpha-D-ribose 1-diphosphate. It functions in the pathway purine metabolism; XMP biosynthesis via salvage pathway; XMP from xanthine: step 1/1. Converts the preformed base xanthine, a product of nucleic acid breakdown, to xanthosine 5'-monophosphate (XMP), so it can be reused for RNA or DNA synthesis. The sequence is that of Xanthine phosphoribosyltransferase from Exiguobacterium sp. (strain ATCC BAA-1283 / AT1b).